We begin with the raw amino-acid sequence, 286 residues long: ATP synthase gamma chain (286 aa).

It belongs to the ATPase gamma chain family. In terms of assembly, F-type ATPases have 2 components, CF(1) - the catalytic core - and CF(0) - the membrane proton channel. CF(1) has five subunits: alpha(3), beta(3), gamma(1), delta(1), epsilon(1). CF(0) has three main subunits: a, b and c.

It localises to the cell inner membrane. Produces ATP from ADP in the presence of a proton gradient across the membrane. The gamma chain is believed to be important in regulating ATPase activity and the flow of protons through the CF(0) complex. This chain is ATP synthase gamma chain, found in Pseudomonas fluorescens (strain ATCC BAA-477 / NRRL B-23932 / Pf-5).